Reading from the N-terminus, the 169-residue chain is T-cell receptor gamma chain C region DFL12 (169 aa).

Positions 1-136 (PSDKRLDADI…LQFMSTSAYY (136 aa)) are c region. The chain crosses the membrane as a helical span at residues 137 to 157 (TYLLLLLKSVIYLAIISFSLL). The Cytoplasmic segment spans residues 158–169 (RRTSVCCNEKRS).

The protein localises to the membrane. The sequence is that of T-cell receptor gamma chain C region DFL12 from Mus musculus (Mouse).